Consider the following 551-residue polypeptide: Glucans biosynthesis protein D (551 aa).

Residues 1–32 (MDRRRFIKGSMAMAAVCGTSGIASLFSQAAFA) constitute a signal peptide (tat-type signal).

Belongs to the OpgD/OpgG family. Post-translationally, predicted to be exported by the Tat system. The position of the signal peptide cleavage has not been experimentally proven.

The protein localises to the periplasm. Its pathway is glycan metabolism; osmoregulated periplasmic glucan (OPG) biosynthesis. Functionally, probably involved in the control of the structural glucose backbone of osmoregulated periplasmic glucans (OPGs). The chain is Glucans biosynthesis protein D from Escherichia coli O1:K1 / APEC.